A 274-amino-acid chain; its full sequence is 2,3,4,5-tetrahydropyridine-2,6-dicarboxylate N-succinyltransferase (274 aa).

Substrate is bound by residues arginine 104 and aspartate 141.

Belongs to the transferase hexapeptide repeat family. In terms of assembly, homotrimer.

Its subcellular location is the cytoplasm. The enzyme catalyses (S)-2,3,4,5-tetrahydrodipicolinate + succinyl-CoA + H2O = (S)-2-succinylamino-6-oxoheptanedioate + CoA. It participates in amino-acid biosynthesis; L-lysine biosynthesis via DAP pathway; LL-2,6-diaminopimelate from (S)-tetrahydrodipicolinate (succinylase route): step 1/3. This is 2,3,4,5-tetrahydropyridine-2,6-dicarboxylate N-succinyltransferase from Escherichia coli O6:H1 (strain CFT073 / ATCC 700928 / UPEC).